Reading from the N-terminus, the 123-residue chain is MARIAGVNIPTNKRVVIALTYIYGIGISLANKICESCNIDHNIRVVNLSDDEIIRIRNFIRENYVVEGDLRKEVSMNIKFLTDIGCYRGLRHRRGLPVRGQRTHTNAKTRKGRSRLPVAAKKK.

Residues proline 97–lysine 123 form a disordered region.

It belongs to the universal ribosomal protein uS13 family. As to quaternary structure, part of the 30S ribosomal subunit. Forms a loose heterodimer with protein S19. Forms two bridges to the 50S subunit in the 70S ribosome.

In terms of biological role, located at the top of the head of the 30S subunit, it contacts several helices of the 16S rRNA. In the 70S ribosome it contacts the 23S rRNA (bridge B1a) and protein L5 of the 50S subunit (bridge B1b), connecting the 2 subunits; these bridges are implicated in subunit movement. Contacts the tRNAs in the A and P-sites. The sequence is that of Small ribosomal subunit protein uS13 from Ehrlichia ruminantium (strain Gardel).